Here is a 280-residue protein sequence, read N- to C-terminus: Formyltetrahydrofolate deformylase (280 aa).

One can recognise an ACT domain in the interval 8 to 86 (VLRTICPDQK…RELNPAGRRR (79 aa)). D225 is a catalytic residue.

The protein belongs to the PurU family. Homohexamer.

The catalysed reaction is (6R)-10-formyltetrahydrofolate + H2O = (6S)-5,6,7,8-tetrahydrofolate + formate + H(+). Its pathway is purine metabolism; IMP biosynthesis via de novo pathway; formate from 10-formyl-5,6,7,8-tetrahydrofolate: step 1/1. With respect to regulation, activated by methionine, inhibited by glycine. Functionally, catalyzes the hydrolysis of 10-formyltetrahydrofolate (formyl-FH4) to formate and tetrahydrofolate (FH4). Provides the major source of formate for the PurT-dependent synthesis of 5'-phosphoribosyl-N-formylglycinamide (FGAR) during aerobic growth. Has a role in regulating the one-carbon pool. The polypeptide is Formyltetrahydrofolate deformylase (Escherichia coli (strain K12)).